The following is a 336-amino-acid chain: MELHILFFILAGLLIAVLIGFSLWSARREKSRIFSNTFSTRPPSTPINNIVSDVPPSLNPQSYAQTTGQHGETEADNPVQIQQEVESSLREIKINLPGQDSAAYQSKVEETPIYSGQPVLPVQPQYQTQVQYQTQPQHIEPAFTQAPQSPIAEATSVLEQSVEELERQAAQGDVDIYSDASVRVELAKNSMQADSVAEQKPVAENNMITLYVVAPEGQQFRGDYVVQSLEALGFQYGEYQIFHRHQHMGNSASPVIFSVANMMQPGIFDLTKIEHFSTVGLVLFMHLPSEGNDVVNFKLLLKTTENLAQALGGFVLNEHREIFDENSRQSYLARVS.

Residues 1-2 (ME) are Periplasmic-facing. Residues 3 to 23 (LHILFFILAGLLIAVLIGFSL) traverse the membrane as a helical segment. The Cytoplasmic segment spans residues 24-336 (WSARREKSRI…SRQSYLARVS (313 aa)). Residues 57–76 (SLNPQSYAQTTGQHGETEAD) form a disordered region. A compositionally biased stretch (polar residues) spans 59–70 (NPQSYAQTTGQH).

Belongs to the ZipA family. Interacts with FtsZ via their C-terminal domains.

The protein resides in the cell inner membrane. Essential cell division protein that stabilizes the FtsZ protofilaments by cross-linking them and that serves as a cytoplasmic membrane anchor for the Z ring. Also required for the recruitment to the septal ring of downstream cell division proteins. The polypeptide is Cell division protein ZipA (Actinobacillus pleuropneumoniae serotype 7 (strain AP76)).